We begin with the raw amino-acid sequence, 281 residues long: Ribosomal protein L11 methyltransferase (281 aa).

S-adenosyl-L-methionine-binding residues include Thr133, Gly154, Asp175, and Asn216.

The protein belongs to the methyltransferase superfamily. PrmA family.

It localises to the cytoplasm. The catalysed reaction is L-lysyl-[protein] + 3 S-adenosyl-L-methionine = N(6),N(6),N(6)-trimethyl-L-lysyl-[protein] + 3 S-adenosyl-L-homocysteine + 3 H(+). Methylates ribosomal protein L11. The protein is Ribosomal protein L11 methyltransferase of Campylobacter jejuni subsp. jejuni serotype O:23/36 (strain 81-176).